We begin with the raw amino-acid sequence, 561 residues long: uncharacterized protein (561 aa).

2 helical membrane passes run 29–49 and 80–100; these read FIFNVGSLTPTTAVLGVKKII and FLFHTVGFFPIYTSSIGASII.

The protein resides in the cell membrane. This is an uncharacterized protein from Mycoplasma genitalium (strain ATCC 33530 / DSM 19775 / NCTC 10195 / G37) (Mycoplasmoides genitalium).